The chain runs to 156 residues: Arginine repressor (156 aa).

The protein belongs to the ArgR family.

It localises to the cytoplasm. It participates in amino-acid biosynthesis; L-arginine biosynthesis [regulation]. Its function is as follows. Regulates arginine biosynthesis genes. This Yersinia pseudotuberculosis serotype I (strain IP32953) protein is Arginine repressor.